Consider the following 430-residue polypeptide: Enolase (430 aa).

Gln163 provides a ligand contact to (2R)-2-phosphoglycerate. Glu205 acts as the Proton donor in catalysis. Positions 242, 285, and 312 each coordinate Mg(2+). (2R)-2-phosphoglycerate-binding residues include Lys337, Arg366, Ser367, and Lys388. Lys337 (proton acceptor) is an active-site residue.

The protein belongs to the enolase family. Mg(2+) is required as a cofactor.

The protein resides in the cytoplasm. The protein localises to the secreted. It localises to the cell surface. The enzyme catalyses (2R)-2-phosphoglycerate = phosphoenolpyruvate + H2O. Its pathway is carbohydrate degradation; glycolysis; pyruvate from D-glyceraldehyde 3-phosphate: step 4/5. Its function is as follows. Catalyzes the reversible conversion of 2-phosphoglycerate (2-PG) into phosphoenolpyruvate (PEP). It is essential for the degradation of carbohydrates via glycolysis. The protein is Enolase of Bifidobacterium animalis subsp. lactis (strain AD011).